Reading from the N-terminus, the 149-residue chain is MKKILVLNGINLNMFGKRDPAHYGTATLEQIDARVAAWGAELGLQIDCFQTNHEGEMVERIHRAHEEGVDALIINAGAWTHYSYGIADALAILKAPVIEVHMSNIHAREEFRHHSVIAGLARGQICGFGVGSYHLALLAASELLNAGQE.

The active-site Proton acceptor is the tyrosine 23. Asparagine 75, histidine 81, and aspartate 88 together coordinate substrate. Histidine 101 (proton donor) is an active-site residue. Substrate contacts are provided by residues 102–103 (MS) and arginine 112.

This sequence belongs to the type-II 3-dehydroquinase family. In terms of assembly, homododecamer.

It catalyses the reaction 3-dehydroquinate = 3-dehydroshikimate + H2O. The protein operates within metabolic intermediate biosynthesis; chorismate biosynthesis; chorismate from D-erythrose 4-phosphate and phosphoenolpyruvate: step 3/7. In terms of biological role, catalyzes a trans-dehydration via an enolate intermediate. The sequence is that of 3-dehydroquinate dehydratase from Pelobacter propionicus (strain DSM 2379 / NBRC 103807 / OttBd1).